A 254-amino-acid polypeptide reads, in one-letter code: Flavin-dependent thymidylate synthase (254 aa).

The ThyX domain occupies 7–237; sequence LRVQLIAKTE…PAVFADFEIT (231 aa). Residues 92 to 95, 103 to 107, and histidine 176 contribute to the dUMP site; these read ELIR and QLSQR. FAD contacts are provided by residues 95-97 and glutamine 103; that span reads RHR. The ThyX motif motif lies at 95-105; the sequence is RHRHFSYSQLS. FAD contacts are provided by residues 192–194 and histidine 198; that span reads NYR. Arginine 203 serves as a coordination point for dUMP. Catalysis depends on arginine 203, which acts as the Involved in ionization of N3 of dUMP, leading to its activation.

Belongs to the thymidylate synthase ThyX family. Homotetramer. Requires FAD as cofactor.

The enzyme catalyses dUMP + (6R)-5,10-methylene-5,6,7,8-tetrahydrofolate + NADPH + H(+) = dTMP + (6S)-5,6,7,8-tetrahydrofolate + NADP(+). It functions in the pathway pyrimidine metabolism; dTTP biosynthesis. In terms of biological role, catalyzes the reductive methylation of 2'-deoxyuridine-5'-monophosphate (dUMP) to 2'-deoxythymidine-5'-monophosphate (dTMP) while utilizing 5,10-methylenetetrahydrofolate (mTHF) as the methyl donor, and NADPH and FADH(2) as the reductant. This Mycobacterium leprae (strain Br4923) protein is Flavin-dependent thymidylate synthase.